The primary structure comprises 85 residues: Small ribosomal subunit protein bS16 (85 aa).

It belongs to the bacterial ribosomal protein bS16 family.

The chain is Small ribosomal subunit protein bS16 from Xanthomonas euvesicatoria pv. vesicatoria (strain 85-10) (Xanthomonas campestris pv. vesicatoria).